Here is a 314-residue protein sequence, read N- to C-terminus: Ribosomal protein L11 methyltransferase (314 aa).

S-adenosyl-L-methionine contacts are provided by Thr-163, Gly-184, Asp-206, and Asn-248.

It belongs to the methyltransferase superfamily. PrmA family.

Its subcellular location is the cytoplasm. The enzyme catalyses L-lysyl-[protein] + 3 S-adenosyl-L-methionine = N(6),N(6),N(6)-trimethyl-L-lysyl-[protein] + 3 S-adenosyl-L-homocysteine + 3 H(+). In terms of biological role, methylates ribosomal protein L11. In Lactobacillus delbrueckii subsp. bulgaricus (strain ATCC BAA-365 / Lb-18), this protein is Ribosomal protein L11 methyltransferase.